Reading from the N-terminus, the 396-residue chain is MTLLNPYFGEFGGQFVPQILIPALRQLEEAFVSAQKDPEFQAEFTDLLKNYAGRPTALTLCKNLTAGTKTKLYLKREDLLHGGAHKTNQVLGQALLAKRMGKSEIIAETGAGQHGVATALACALLGLKCRVYMGAKDVERQSPNVFRMRLMGAEVIPVHSGSSTLKDACNEALRDWSGSYETAHYLLGTAAGPHPYPTIVREFQRMIGEETKAQILEKEGRLPDAVLACVGGGSNAIGMFADFIDDTHVRLIGIEPGGLGIESGQHGAPLKHGRVGIYFGMKSPMMQTSDGQIEESYSISAGLDFPSVGPQHAYLNSIGRADYVSITDDEALDAFKALCRGEGIIPALESSHALAHALKMIKAEPEKEQLLVVNLSGRGDKDIFTVHDILKDRGEI.

Lys-86 is subject to N6-(pyridoxal phosphate)lysine.

This sequence belongs to the TrpB family. As to quaternary structure, tetramer of two alpha and two beta chains. Requires pyridoxal 5'-phosphate as cofactor.

The catalysed reaction is (1S,2R)-1-C-(indol-3-yl)glycerol 3-phosphate + L-serine = D-glyceraldehyde 3-phosphate + L-tryptophan + H2O. The protein operates within amino-acid biosynthesis; L-tryptophan biosynthesis; L-tryptophan from chorismate: step 5/5. In terms of biological role, the beta subunit is responsible for the synthesis of L-tryptophan from indole and L-serine. The sequence is that of Tryptophan synthase beta chain from Pectobacterium atrosepticum (strain SCRI 1043 / ATCC BAA-672) (Erwinia carotovora subsp. atroseptica).